The sequence spans 37 residues: Large ribosomal subunit protein bL36c (37 aa).

The protein belongs to the bacterial ribosomal protein bL36 family.

Its subcellular location is the plastid. The protein localises to the chloroplast. The sequence is that of Large ribosomal subunit protein bL36c from Cryptomeria japonica (Japanese cedar).